Here is a 276-residue protein sequence, read N- to C-terminus: Short-chain dehydrogenase/reductase ATR10 (276 aa).

Residues Ile29, Ser51, Asp78, and Asn105 each contribute to the NADP(+) site. The active-site Proton donor is the Ser161. 2 residues coordinate NADP(+): Lys185 and Thr214. Residue Lys185 is the Lowers pKa of active site Tyr of the active site.

It belongs to the short-chain dehydrogenases/reductases (SDR) family.

It functions in the pathway mycotoxin biosynthesis. In terms of biological role, short-chain dehydrogenase/reductase; part of the core atranone cluster (CAC) which products are predicted to catalyze most or all steps of mycotoxin atranone synthesis, starting from geranylgeranyl pyrophosphate (GGPP). The initial cyclization of GGPP to dolabellane is probably performed by the terpene cyclase ATR13. The Baeyer-Villiger oxidation near the end of the atranone synthesis, which converts atranones D and E to atranones F and G is predicted to be catalyzed by the monooxygenase ATR8. Of the CAC's other predicted gene products, the reducing PKS ATR6 might synthesize a polyketide chain. This polyketide is probably transferred onto the atranone backbone by the polyketide transferase ATR5. Other predicted CAC products include 4 oxygenases (ATR2, ATR3, ATR4, and ATR14), 3 short-chain reductases (ATR7, ATR9, and ATR10), and a methyltransferase (ATR12). These may all be involved in the various steps of atranone biosynthesis, although their specific roles must await experimental determination. This is Short-chain dehydrogenase/reductase ATR10 from Stachybotrys chlorohalonatus (strain IBT 40285).